A 457-amino-acid chain; its full sequence is MIFAGKAPSNTSTLMKFYSLILYSLLFSFPFLCHPLPLPSYLHHTINLTHSLLAASNPSLANNCWLCISLSSSAYTAVPALQTDRATSPVSLHLQTSFNSPHLYPPEELIYFLDRSIKTSPDISHQQAAALLHTYLKHLSPYINSTPPIFGPLTTQTTIPVAAPLCISRRRPTGIPLGNLSPSRCSFTLHLRSPTTNITETIGAFQLHITDKPSINTDKLKNISSHYCLGRHLPCISLHPWLPSPCSSDCPPRPSSCLLIPSPENNSESLLVDTRRFLIHHENRTSPSTQLPHQSPLQPLTAAALAGSLGVWIQDTPFSTPSHLFTLHLQFCLAQGLFFLCGSSNYMCLPANWTGTCTLVFLTPKIQFANGTEELPVPLMTPTRQKRVIPLIPLMFGLGLSASTIALSTGIAGISTSVMTFRSLSNDFSASITDISQTLSVLQAQVDSLAAVVLQNR.

The first 35 residues, 1 to 35 (MIFAGKAPSNTSTLMKFYSLILYSLLFSFPFLCHP), serve as a signal peptide directing secretion. 2 N-linked (GlcNAc...) asparagine glycosylation sites follow: asparagine 10 and asparagine 47. The short motif at 64–67 (CWLC) is the CXXC element. Residues asparagine 197, asparagine 222, asparagine 265, asparagine 283, asparagine 352, and asparagine 370 are each glycosylated (N-linked (GlcNAc...) asparagine). The segment at 388-408 (VIPLIPLMFGLGLSASTIALS) is fusion peptide.

The protein belongs to the gamma type-C retroviral envelope protein family. HERV class-I H env subfamily. As to quaternary structure, the surface (SU) and transmembrane (TM) proteins form a heterodimer. SU and TM are attached by noncovalent interactions or by a labile interchain disulfide bond. In terms of processing, specific enzymatic cleavages in vivo yield the mature SU and TM proteins. Post-translationally, the CXXC motif is highly conserved across a broad range of retroviral envelope proteins. It is thought to participate in the formation of a labile disulfide bond possibly with the CX6CC motif present in the transmembrane protein.

It localises to the virion. Functionally, retroviral envelope proteins mediate receptor recognition and membrane fusion during early infection. Endogenous envelope proteins may have kept, lost or modified their original function during evolution. Its function is as follows. SU mediates receptor recognition. In terms of biological role, TM anchors the envelope heterodimer to the viral membrane through one transmembrane domain. The other hydrophobic domain, called fusion peptide, mediates fusion of the viral membrane with the target cell membrane. This chain is ERV-H1 provirus ancestral Env polyprotein, found in Pan troglodytes (Chimpanzee).